The primary structure comprises 380 residues: Homoserine O-succinyltransferase (380 aa).

Residues 51–362 (NAVLICHALS…SKHGHDAFLL (312 aa)) enclose the AB hydrolase-1 domain. Residue serine 157 is the Nucleophile of the active site. Position 227 (arginine 227) interacts with substrate. Active-site residues include aspartate 324 and histidine 357. Substrate is bound at residue aspartate 358.

The protein belongs to the AB hydrolase superfamily. MetX family. In terms of assembly, homodimer.

It localises to the cytoplasm. It carries out the reaction L-homoserine + succinyl-CoA = O-succinyl-L-homoserine + CoA. It participates in amino-acid biosynthesis; L-methionine biosynthesis via de novo pathway; O-succinyl-L-homoserine from L-homoserine: step 1/1. Functionally, transfers a succinyl group from succinyl-CoA to L-homoserine, forming succinyl-L-homoserine. This Cellvibrio japonicus (strain Ueda107) (Pseudomonas fluorescens subsp. cellulosa) protein is Homoserine O-succinyltransferase.